We begin with the raw amino-acid sequence, 555 residues long: CTP synthase (555 aa).

The tract at residues 1–279 (MATNRAKSST…DNYIIRRLNL (279 aa)) is amidoligase domain. Ser21 contributes to the CTP binding site. Ser21 provides a ligand contact to UTP. ATP-binding positions include 22–27 (SLGKGL) and Asp79. Residues Asp79 and Glu153 each contribute to the Mg(2+) site. Residues 160 to 162 (DIE), 200 to 205 (KTKPTQ), and Lys236 contribute to the CTP site. Residues 200–205 (KTKPTQ) and Lys236 each bind UTP. Positions 304-553 (TIGIVGKYID…VDAALKHQAG (250 aa)) constitute a Glutamine amidotransferase type-1 domain. Gly367 is a binding site for L-glutamine. Cys394 functions as the Nucleophile; for glutamine hydrolysis in the catalytic mechanism. L-glutamine is bound by residues 395–398 (LGLQ), Glu417, and Arg478. Residues His526 and Glu528 contribute to the active site.

It belongs to the CTP synthase family. In terms of assembly, homotetramer.

The enzyme catalyses UTP + L-glutamine + ATP + H2O = CTP + L-glutamate + ADP + phosphate + 2 H(+). It carries out the reaction L-glutamine + H2O = L-glutamate + NH4(+). It catalyses the reaction UTP + NH4(+) + ATP = CTP + ADP + phosphate + 2 H(+). It participates in pyrimidine metabolism; CTP biosynthesis via de novo pathway; CTP from UDP: step 2/2. With respect to regulation, allosterically activated by GTP, when glutamine is the substrate; GTP has no effect on the reaction when ammonia is the substrate. The allosteric effector GTP functions by stabilizing the protein conformation that binds the tetrahedral intermediate(s) formed during glutamine hydrolysis. Inhibited by the product CTP, via allosteric rather than competitive inhibition. Its function is as follows. Catalyzes the ATP-dependent amination of UTP to CTP with either L-glutamine or ammonia as the source of nitrogen. Regulates intracellular CTP levels through interactions with the four ribonucleotide triphosphates. The protein is CTP synthase of Corynebacterium jeikeium (strain K411).